Here is a 216-residue protein sequence, read N- to C-terminus: V-type ATP synthase subunit D (216 aa).

Belongs to the V-ATPase D subunit family.

Its function is as follows. Produces ATP from ADP in the presence of a proton gradient across the membrane. The chain is V-type ATP synthase subunit D from Clostridium botulinum (strain ATCC 19397 / Type A).